A 54-amino-acid chain; its full sequence is UPF0391 membrane protein TERTU_3637 (54 aa).

Transmembrane regions (helical) follow at residues 4 to 24 (WALV…TGLA) and 29 to 49 (SIAW…LVAG).

This sequence belongs to the UPF0391 family.

The protein resides in the cell membrane. This Teredinibacter turnerae (strain ATCC 39867 / T7901) protein is UPF0391 membrane protein TERTU_3637.